Here is a 248-residue protein sequence, read N- to C-terminus: MWLGVVTLFPEMFRAVTDFGVTGRAVSKGLLEMQTWNPRDFTHDKHKTVDDRPYGGGPGMLMMVQPLRDAIHAAKAAAGKEAKVIYLSPQGRKLTQQGVEELAKSSSLVLVCGRYEGVDERIIQTEVDEEWSIGDYVLSGGELPAMTLIDSVSRLVPGVLGKKASAEQDSFSDGLLDCPHYTRPESMDGLDVPAVLLSGNHEHIRRWRLQQSLGRTLLRRPELLENLALTGEQEQLLAEFVDSIKQDA.

Residues Gly-113 and 133-138 (IGDYVL) contribute to the S-adenosyl-L-methionine site.

Belongs to the RNA methyltransferase TrmD family. Homodimer.

Its subcellular location is the cytoplasm. The enzyme catalyses guanosine(37) in tRNA + S-adenosyl-L-methionine = N(1)-methylguanosine(37) in tRNA + S-adenosyl-L-homocysteine + H(+). Functionally, specifically methylates guanosine-37 in various tRNAs. This Shewanella piezotolerans (strain WP3 / JCM 13877) protein is tRNA (guanine-N(1)-)-methyltransferase.